A 359-amino-acid chain; its full sequence is Putative plant UBX domain-containing protein 15 (359 aa).

The region spanning 277–357 is the UBX domain; sequence DRSVVCSISV…GIANSIISVT (81 aa).

This chain is Putative plant UBX domain-containing protein 15, found in Arabidopsis thaliana (Mouse-ear cress).